Reading from the N-terminus, the 255-residue chain is 5'-nucleotidase SurE (255 aa).

Positions 8, 9, 39, and 91 each coordinate a divalent metal cation.

The protein belongs to the SurE nucleotidase family. The cofactor is a divalent metal cation.

The protein resides in the cytoplasm. The enzyme catalyses a ribonucleoside 5'-phosphate + H2O = a ribonucleoside + phosphate. Its function is as follows. Nucleotidase that shows phosphatase activity on nucleoside 5'-monophosphates. The sequence is that of 5'-nucleotidase SurE from Acinetobacter baylyi (strain ATCC 33305 / BD413 / ADP1).